Reading from the N-terminus, the 267-residue chain is Large ribosomal subunit protein uL4 (267 aa).

The protein belongs to the universal ribosomal protein uL4 family. As to quaternary structure, part of the 50S ribosomal subunit.

One of the primary rRNA binding proteins, this protein initially binds near the 5'-end of the 23S rRNA. It is important during the early stages of 50S assembly. It makes multiple contacts with different domains of the 23S rRNA in the assembled 50S subunit and ribosome. In terms of biological role, forms part of the polypeptide exit tunnel. The sequence is that of Large ribosomal subunit protein uL4 from Saccharolobus islandicus (strain Y.N.15.51 / Yellowstone #2) (Sulfolobus islandicus).